A 237-amino-acid chain; its full sequence is Phosphoribosylaminoimidazole-succinocarboxamide synthase (237 aa).

Belongs to the SAICAR synthetase family.

The enzyme catalyses 5-amino-1-(5-phospho-D-ribosyl)imidazole-4-carboxylate + L-aspartate + ATP = (2S)-2-[5-amino-1-(5-phospho-beta-D-ribosyl)imidazole-4-carboxamido]succinate + ADP + phosphate + 2 H(+). Its pathway is purine metabolism; IMP biosynthesis via de novo pathway; 5-amino-1-(5-phospho-D-ribosyl)imidazole-4-carboxamide from 5-amino-1-(5-phospho-D-ribosyl)imidazole-4-carboxylate: step 1/2. This is Phosphoribosylaminoimidazole-succinocarboxamide synthase from Yersinia enterocolitica serotype O:8 / biotype 1B (strain NCTC 13174 / 8081).